A 369-amino-acid polypeptide reads, in one-letter code: MAIKVLVVDDSSFFRRRVSEIINSESRLEVIDVAVNGREAVEKAKALKPDVITMDIEMPVMDGITAVREIMAASPTPILMFSSLTHDGAKATLDALDAGALDFLPKKFEDIARNRDEAVSLLQQRVIQIASKRAFMRRPVARPAAATSSARPLASRTAAPAASAPARPATTKFRASGKKYQLTAIGTSTGGPVALQKILTRLPMNYPHPIVLIQHMPATFTAAFASRLNTLCKIQVKEAQDGDVLQAGVAYLAPGGKQMMIDGRAGAARLRIIDGGDRMNYKPCVDVTFGSAAKVYGDKVLSMVLTGMGADGREGARMLKSAGSTIWAQDEESCVVYGMPQAVAKAGISSEDLPLDRIAERMLVEVGLA.

Residues 4–121 (KVLVVDDSSF…ARNRDEAVSL (118 aa)) enclose the Response regulatory domain. Asp-55 carries the 4-aspartylphosphate modification. Positions 146–171 (ATSSARPLASRTAAPAASAPARPATT) are enriched in low complexity. The tract at residues 146-175 (ATSSARPLASRTAAPAASAPARPATTKFRA) is disordered. The CheB-type methylesterase domain occupies 176 to 369 (SGKKYQLTAI…ERMLVEVGLA (194 aa)). Active-site residues include Ser-188, His-215, and Asp-311.

The protein belongs to the CheB family. In terms of processing, phosphorylated by CheA. Phosphorylation of the N-terminal regulatory domain activates the methylesterase activity.

It is found in the cytoplasm. The enzyme catalyses [protein]-L-glutamate 5-O-methyl ester + H2O = L-glutamyl-[protein] + methanol + H(+). It catalyses the reaction L-glutaminyl-[protein] + H2O = L-glutamyl-[protein] + NH4(+). In terms of biological role, involved in chemotaxis. Part of a chemotaxis signal transduction system that modulates chemotaxis in response to various stimuli. Catalyzes the demethylation of specific methylglutamate residues introduced into the chemoreceptors (methyl-accepting chemotaxis proteins or MCP) by CheR. Also mediates the irreversible deamidation of specific glutamine residues to glutamic acid. The chain is Protein-glutamate methylesterase/protein-glutamine glutaminase from Vibrio parahaemolyticus serotype O3:K6 (strain RIMD 2210633).